Reading from the N-terminus, the 201-residue chain is MMTFKNLRYGLSSSVVLAASLFSVLSYAATDSIGLTVITTVEMGTCTATLVNDSDQDISVVDFGDVYISEINAKTKVKTFKLKFKDCAGIPNKKAQIKLTKRATCEGTANDGAGFANGSTAADKASAVAVEVWSTVTPATGSATQFSCVTPASQEVTISTAANAVVYYPMSARLVVEKNKTVNNVTAGKFSAPATFTVTYN.

A signal peptide spans 1-28; sequence MMTFKNLRYGLSSSVVLAASLFSVLSYA.

It belongs to the fimbrial protein family.

The protein resides in the fimbrium. Its function is as follows. Part of the yadCKLM-htrE-yadVN fimbrial operon. Could contribute to adhesion to various surfaces in specific environmental niches. This is an uncharacterized protein from Escherichia coli (strain K12).